We begin with the raw amino-acid sequence, 498 residues long: Cytochrome P450 6B1 (498 aa).

Residue cysteine 443 participates in heme binding.

Belongs to the cytochrome P450 family. Heme serves as cofactor. Midgut microsome.

It localises to the endoplasmic reticulum membrane. The protein resides in the microsome membrane. The enzyme catalyses an organic molecule + reduced [NADPH--hemoprotein reductase] + O2 = an alcohol + oxidized [NADPH--hemoprotein reductase] + H2O + H(+). Enables the insect to feed on furanocoumarin-producing plants and evolved as an adaptation for detoxification of xanthotoxin and other furanocoumarins. This chain is Cytochrome P450 6B1 (CYP6B1), found in Papilio polyxenes (Black swallowtail butterfly).